An 816-amino-acid polypeptide reads, in one-letter code: uncharacterized protein (816 aa).

Residue 503-534 (DTWTVITGGTDGIGKAYIEELCKTRGLKKFYL) coordinates NADP(+). Ser-641 provides a ligand contact to substrate. The active-site Proton acceptor is the Tyr-661. Helical transmembrane passes span 743 to 763 (FGFSKYFSSLLLCSEFISIVL) and 777 to 797 (VFIISRLSIFVHFYHDFFLLN).

This sequence belongs to the short-chain dehydrogenases/reductases (SDR) family.

The protein resides in the membrane. This is an uncharacterized protein from Caenorhabditis elegans.